The sequence spans 412 residues: uncharacterized protein (412 aa).

In terms of domain architecture, TRAM spans 6 to 64 (ELAKGDIISVEVLRPAHGGEGIGHHDGRVIFVKGGIPGDVVDVEIAQLKKKWARGEVVK). S-adenosyl-L-methionine-binding residues include glutamine 242, tyrosine 278, glutamate 300, and aspartate 341. Cysteine 368 serves as the catalytic Nucleophile.

The protein belongs to the class I-like SAM-binding methyltransferase superfamily. RNA M5U methyltransferase family.

This is an uncharacterized protein from Corynebacterium glutamicum (strain ATCC 13032 / DSM 20300 / JCM 1318 / BCRC 11384 / CCUG 27702 / LMG 3730 / NBRC 12168 / NCIMB 10025 / NRRL B-2784 / 534).